Here is a 280-residue protein sequence, read N- to C-terminus: Ribonuclease Z (280 aa).

The Zn(2+) site is built by His-61, His-63, Asp-65, His-66, His-153, Asp-176, and His-240. Asp-65 acts as the Proton acceptor in catalysis.

Belongs to the RNase Z family. In terms of assembly, homodimer. The cofactor is Zn(2+).

It carries out the reaction Endonucleolytic cleavage of RNA, removing extra 3' nucleotides from tRNA precursor, generating 3' termini of tRNAs. A 3'-hydroxy group is left at the tRNA terminus and a 5'-phosphoryl group is left at the trailer molecule.. In terms of biological role, zinc phosphodiesterase, which displays some tRNA 3'-processing endonuclease activity. Probably involved in tRNA maturation, by removing a 3'-trailer from precursor tRNA. The chain is Ribonuclease Z from Mycobacterium avium (strain 104).